We begin with the raw amino-acid sequence, 228 residues long: Eukaryotic translation initiation factor 4E-2 (228 aa).

Cysteine 130 and cysteine 134 are joined by a disulfide.

The protein belongs to the eukaryotic initiation factor 4E family. In terms of assembly, eIF4F is a multi-subunit complex, the composition of which varies with external and internal environmental conditions. It is composed of at least eIF4A, eIF4E and eIF4G. eIF4E is also known to interact with other partners. Highly expressed in all somatic tissues.

Recognizes and binds the 7-methylguanosine-containing mRNA cap during an early step in the initiation of protein synthesis and facilitates ribosome binding by inducing the unwinding of the mRNAs secondary structures. All 5 eIF4E proteins bind monomethyl cap structures. Only ife-1, ife-2 and ife-5 bind trimethyl cap structures which result from trans-splicing. Translation of trimethyl cap structure mRNAs may be regulated by intracellular redox state; disulfide bonds change the width and depth of the cap-binding cavity determining selectivity to mRNA caps. Probably by regulating mRNA translation in somatic cells, negatively regulates lifespan independently of daf-2/insulin and let-363/TOR pathways. Negatively regulates resistance to oxidative stress. May play a role in embryonic development. The protein is Eukaryotic translation initiation factor 4E-2 (ife-2) of Caenorhabditis elegans.